A 150-amino-acid chain; its full sequence is UPF0260 protein VIBHAR_03078 (150 aa).

The protein belongs to the UPF0260 family.

The protein is UPF0260 protein VIBHAR_03078 of Vibrio campbellii (strain ATCC BAA-1116).